The sequence spans 361 residues: D-alanine--D-alanine ligase (361 aa).

The region spanning 134 to 344 (KLLLKSFDIP…FKDLVDNLID (211 aa)) is the ATP-grasp domain. 167–222 (KEVLGYPVIVKPAVLGSSIGINVAYSENQIESFIKEALKYDLTIVIEKFIEAREIE) contacts ATP. Mg(2+)-binding residues include Asp-297, Glu-311, and Asn-313.

The protein belongs to the D-alanine--D-alanine ligase family. Requires Mg(2+) as cofactor. Mn(2+) is required as a cofactor.

It localises to the cytoplasm. The enzyme catalyses 2 D-alanine + ATP = D-alanyl-D-alanine + ADP + phosphate + H(+). It participates in cell wall biogenesis; peptidoglycan biosynthesis. Functionally, cell wall formation. In Borreliella burgdorferi (strain ATCC 35210 / DSM 4680 / CIP 102532 / B31) (Borrelia burgdorferi), this protein is D-alanine--D-alanine ligase.